A 321-amino-acid chain; its full sequence is UDP-3-O-acylglucosamine N-acyltransferase (321 aa).

The Proton acceptor role is filled by histidine 231.

It belongs to the transferase hexapeptide repeat family. LpxD subfamily. In terms of assembly, homotrimer.

It carries out the reaction a UDP-3-O-[(3R)-3-hydroxyacyl]-alpha-D-glucosamine + a (3R)-hydroxyacyl-[ACP] = a UDP-2-N,3-O-bis[(3R)-3-hydroxyacyl]-alpha-D-glucosamine + holo-[ACP] + H(+). Its pathway is bacterial outer membrane biogenesis; LPS lipid A biosynthesis. Functionally, catalyzes the N-acylation of UDP-3-O-acylglucosamine using 3-hydroxyacyl-ACP as the acyl donor. Is involved in the biosynthesis of lipid A, a phosphorylated glycolipid that anchors the lipopolysaccharide to the outer membrane of the cell. This chain is UDP-3-O-acylglucosamine N-acyltransferase, found in Campylobacter jejuni subsp. jejuni serotype O:2 (strain ATCC 700819 / NCTC 11168).